The chain runs to 185 residues: RING-H2 finger protein ATL8 (185 aa).

Residues 28-48 (LVLILAVLLCALTCIIGLIAV) form a helical membrane-spanning segment. Residues 104–146 (CAICLTEFAAGDELRVLPQCGHGFHVSCIDTWLGSHSSCPSCR) form an RING-type; atypical zinc finger. Positions 161 to 185 (PGSSSSGPEPDTRIKQREDGPDNLP) are disordered. Residues 170-185 (PDTRIKQREDGPDNLP) are compositionally biased toward basic and acidic residues.

The protein belongs to the RING-type zinc finger family. ATL subfamily.

Its subcellular location is the membrane. The enzyme catalyses S-ubiquitinyl-[E2 ubiquitin-conjugating enzyme]-L-cysteine + [acceptor protein]-L-lysine = [E2 ubiquitin-conjugating enzyme]-L-cysteine + N(6)-ubiquitinyl-[acceptor protein]-L-lysine.. It functions in the pathway protein modification; protein ubiquitination. The sequence is that of RING-H2 finger protein ATL8 (ATL8) from Arabidopsis thaliana (Mouse-ear cress).